The primary structure comprises 145 residues: ATP synthase epsilon chain (145 aa).

It belongs to the ATPase epsilon chain family. In terms of assembly, F-type ATPases have 2 components, CF(1) - the catalytic core - and CF(0) - the membrane proton channel. CF(1) has five subunits: alpha(3), beta(3), gamma(1), delta(1), epsilon(1). CF(0) has three main subunits: a, b and c.

It localises to the cell membrane. Produces ATP from ADP in the presence of a proton gradient across the membrane. This Buchnera aphidicola subsp. Baizongia pistaciae (strain Bp) protein is ATP synthase epsilon chain.